The following is a 304-amino-acid chain: Glycosyltransferase AglE (304 aa).

The protein belongs to the glycosyltransferase 2 family.

The protein localises to the cell membrane. Its pathway is cell surface structure biogenesis; S-layer biogenesis. In terms of biological role, involved in the assembly of a N-linked pentasaccharide that decorates the S-layer glycoprotein and flagellins. Catalyzes the addition to the dolichol phosphate carrier of the hexuronic acid found at position 4 of the pentasaccharide. The protein is Glycosyltransferase AglE (aglE) of Haloferax volcanii (strain ATCC 29605 / DSM 3757 / JCM 8879 / NBRC 14742 / NCIMB 2012 / VKM B-1768 / DS2) (Halobacterium volcanii).